A 253-amino-acid polypeptide reads, in one-letter code: 5'-nucleotidase SurE (253 aa).

The a divalent metal cation site is built by Asp-8, Asp-9, Ser-39, and Asn-92.

The protein belongs to the SurE nucleotidase family. A divalent metal cation serves as cofactor.

The protein localises to the cytoplasm. It carries out the reaction a ribonucleoside 5'-phosphate + H2O = a ribonucleoside + phosphate. In terms of biological role, nucleotidase that shows phosphatase activity on nucleoside 5'-monophosphates. The polypeptide is 5'-nucleotidase SurE (Burkholderia mallei (strain NCTC 10247)).